Consider the following 276-residue polypeptide: Elongation factor Ts (276 aa).

The segment at 76–79 (TDFV) is involved in Mg(2+) ion dislocation from EF-Tu.

It belongs to the EF-Ts family.

Its subcellular location is the cytoplasm. In terms of biological role, associates with the EF-Tu.GDP complex and induces the exchange of GDP to GTP. It remains bound to the aminoacyl-tRNA.EF-Tu.GTP complex up to the GTP hydrolysis stage on the ribosome. The chain is Elongation factor Ts from Mycobacterium leprae (strain Br4923).